Consider the following 370-residue polypeptide: NSFL1 cofactor p47 (370 aa).

Residues 54–73 (SQATPSSVSRGTAPSDNRVT) form a disordered region. Residues Ser-74, Ser-102, and Ser-114 each carry the phosphoserine modification. 2 disordered regions span residues 80–116 (HDQDEEEEEEEGQRFYAGGSERSGQQIVGPPRKKSPN) and 138–157 (TKSPGETSKPRPFAGGGYRL). The short motif at 109-115 (PPRKKSP) is the Nuclear localization signal element. Residue Ser-140 is modified to Phosphoserine; by CDK1. The residue at position 167 (Tyr-167) is a Phosphotyrosine. Residues 172 to 175 (RRRH) carry the Nuclear localization signal motif. Phosphoserine occurs at positions 176, 192, and 272. Residues 179–244 (DVHVVLKLWK…MEDHRDEDFV (66 aa)) enclose the SEP domain. The region spanning 291-368 (EAEPTTNIQI…NLLNAVIVQR (78 aa)) is the UBX domain.

The protein belongs to the NSFL1C family. In terms of assembly, part of a ternary complex containing STX5A, NSFL1C and VCP. NSFL1C forms a homotrimer that binds to one end of a VCP homohexamer. The complex binds to membranes enriched in phosphatidylethanolamine-containing lipids and promotes Golgi membrane fusion. Interaction with VCIP135 leads to dissociation of the complex via ATP hydrolysis by VCP. Binds ubiquitin and mono-ubiquitinated proteins via its N-terminal UBA-like domain when bound to VCP. Phosphorylated during mitosis. Phosphorylation inhibits interaction with Golgi membranes and is required for the fragmentation of the Golgi stacks during mitosis. Highly expressed in heart, brain, spleen, lung, liver, muscle, kidney and testis.

It localises to the nucleus. The protein resides in the golgi apparatus. It is found in the golgi stack. Its subcellular location is the chromosome. The protein localises to the cytoplasm. It localises to the cytoskeleton. The protein resides in the microtubule organizing center. It is found in the centrosome. Its function is as follows. Reduces the ATPase activity of VCP. Necessary for the fragmentation of Golgi stacks during mitosis and for VCP-mediated reassembly of Golgi stacks after mitosis. May play a role in VCP-mediated formation of transitional endoplasmic reticulum (tER). Inhibits the activity of CTSL (in vitro). Together with UBXN2B/p37, regulates the centrosomal levels of kinase AURKA/Aurora A during mitotic progression by promoting AURKA removal from centrosomes in prophase. Also, regulates spindle orientation during mitosis. The sequence is that of NSFL1 cofactor p47 (Nsfl1c) from Rattus norvegicus (Rat).